A 244-amino-acid chain; its full sequence is Large ribosomal subunit protein uL30w (244 aa).

The protein belongs to the universal ribosomal protein uL30 family.

The sequence is that of Large ribosomal subunit protein uL30w (RPL7D) from Arabidopsis thaliana (Mouse-ear cress).